Consider the following 397-residue polypeptide: DnaJ homolog subfamily A member 1 (397 aa).

One can recognise a J domain in the interval 6–68; that stretch reads TYYDVLGVKP…KKRELYDKGG (63 aa). At lysine 66 the chain carries N6-acetyllysine. Position 83 is a phosphoserine (serine 83). Residues 121 to 205 form a CR-type zinc finger; the sequence is GATRKLALQK…CNGRKIVREK (85 aa). The Zn(2+) site is built by cysteine 134, cysteine 137, cysteine 150, cysteine 153, cysteine 177, cysteine 180, cysteine 193, and cysteine 196. 4 CXXCXGXG motif repeats span residues 134–141, 150–157, 177–184, and 193–200; these read CDKCEGRG, CPNCRGTG, CMECQGHG, and CKSCNGRK. The residue at position 335 (serine 335) is a Phosphoserine. The tract at residues 352–397 is disordered; it reads VEETDEMDQVELVDFDPNQERRRHYNGEAYEDDEHHPRGGVQCQTS. Positions 353 to 365 are enriched in acidic residues; it reads EETDEMDQVELVD. Tyrosine 381 is subject to Phosphotyrosine. The residue at position 394 (cysteine 394) is a Cysteine methyl ester. Cysteine 394 carries the S-farnesyl cysteine lipid modification. Residues 395 to 397 constitute a propeptide, removed in mature form; sequence QTS.

Identified in a complex with HSPA1B and BAX. Interacts with RNF207.

It localises to the membrane. The protein localises to the cytoplasm. Its subcellular location is the microsome. It is found in the mitochondrion. The protein resides in the nucleus. It localises to the perinuclear region. In terms of biological role, co-chaperone for HSPA8/Hsc70. Plays a role in protein transport into mitochondria via its role as co-chaperone. Stimulates ATP hydrolysis, but not the folding of unfolded proteins mediated by HSPA1A (in vitro). Promotes apoptosis in response to cellular stress mediated by exposure to anisomycin or UV. Functions as co-chaperone for HSPA1B and negatively regulates the translocation of BAX from the cytosol to mitochondria in response to cellular stress, thereby protecting cells against apoptosis. In Mus musculus (Mouse), this protein is DnaJ homolog subfamily A member 1 (Dnaja1).